We begin with the raw amino-acid sequence, 44 residues long: U2-agatoxin-Ao1s (44 aa).

Positions 1–9 are excised as a propeptide; it reads KKVYSFLKL. 3 cysteine pairs are disulfide-bonded: Cys12–Cys28, Cys19–Cys33, and Cys27–Cys43.

This sequence belongs to the neurotoxin 01 (U2-agtx) family. Expressed by the venom gland.

The protein resides in the secreted. Functionally, insect active toxin causing rapid but reversible paralysis in crickets. No activity shown in mammals. Does not show effect on mammalian voltage-gated calcium channels. The chain is U2-agatoxin-Ao1s from Agelena orientalis (Funnel-web spider).